Here is a 94-residue protein sequence, read N- to C-terminus: Co-chaperonin GroES (94 aa).

The protein belongs to the GroES chaperonin family. Heptamer of 7 subunits arranged in a ring. Interacts with the chaperonin GroEL.

It localises to the cytoplasm. Functionally, together with the chaperonin GroEL, plays an essential role in assisting protein folding. The GroEL-GroES system forms a nano-cage that allows encapsulation of the non-native substrate proteins and provides a physical environment optimized to promote and accelerate protein folding. GroES binds to the apical surface of the GroEL ring, thereby capping the opening of the GroEL channel. This chain is Co-chaperonin GroES, found in Clostridium botulinum (strain Eklund 17B / Type B).